Consider the following 216-residue polypeptide: Peroxiredoxin (216 aa).

Residues Val-2–Ile-158 form the Thioredoxin domain. Cys-46 (cysteine sulfenic acid (-SOH) intermediate) is an active-site residue. Residue Arg-121 coordinates substrate. Cysteines 205 and 211 form a disulfide.

This sequence belongs to the peroxiredoxin family. Prx6 subfamily. In terms of assembly, homodecamer. Pentamer of dimers that assemble into a ring structure.

Its subcellular location is the cytoplasm. It catalyses the reaction a hydroperoxide + [thioredoxin]-dithiol = an alcohol + [thioredoxin]-disulfide + H2O. Functionally, thiol-specific peroxidase that catalyzes the reduction of hydrogen peroxide and organic hydroperoxides to water and alcohols, respectively. Plays a role in cell protection against oxidative stress by detoxifying peroxides. The polypeptide is Peroxiredoxin (ahpC) (Pyrococcus horikoshii (strain ATCC 700860 / DSM 12428 / JCM 9974 / NBRC 100139 / OT-3)).